The chain runs to 740 residues: Cell death abnormality protein 12 (740 aa).

Residues Ser348–Leu494 form the ELMO domain. Positions Ile555–Thr690 are required for punctate localization, cell corpse engulfment and distal cell tip migration. Residues Pro724 to Pro727 carry the SH3-binding motif.

As to quaternary structure, interacts with psr-1. Forms a ternary complex with ced-2 and ced-5.

The protein localises to the cytoplasm. Functionally, involved in apoptosis and necrosis. Required for the cell corpse engulfment process. Has roles in the formation of actin halos and distal tip cell migration. Plays no role in amphid axon outgrowth. This is Cell death abnormality protein 12 from Caenorhabditis briggsae.